We begin with the raw amino-acid sequence, 101 residues long: Small ribosomal subunit protein bS18c (101 aa).

This sequence belongs to the bacterial ribosomal protein bS18 family. In terms of assembly, part of the 30S ribosomal subunit.

It is found in the plastid. The protein localises to the chloroplast. The sequence is that of Small ribosomal subunit protein bS18c from Panax ginseng (Korean ginseng).